An 876-amino-acid polypeptide reads, in one-letter code: MEMKPKYNPTEVEAGRYQEWVEKGYFRPSGDKSKETYTIVIPPPNVTGKLHLGHAWDTTLQDILTRMKRMQGYDTLYLPGMDHAGIATQAKVEAKLNEQGISRHDIGREKFLEEVWSWKDEYASFIRQQWAKLGLGLDYDRERFTLDEGLSKAVRKVFVDMYNKGLIYRGERIINWDPEARTALSDIEVVHEDVEGKFYHFKYPYADGEGYIEIATTRPETMLGDTAIVVNPDDERYKDVIGKKVILPIVNRELPILADEYVDVEFGSGAMKVTPAHDPNDFEIGQRHNLESIIVMDEEGKMNDKAGKYEGMDRFECRAQLVEDLKEQDLVIKIEDHVHAVGHSERTGAVVEPYLSTQWFVNMEPLAKQALDNQKTDNRINFVPERFEHTFNQWMENIRDWTISRQLWWGHQIPAWYHKETGEIYVGETEPEDAENWVQDEDVLDTWFSSGLWPFSTLGWPDVESEDYQRYYPTNALVTGYDIIFFWVARMIFQGLEFTGERPFDDVLLHGLVRAEDGRKMSKSLGNGVDPMDVINEYGADSLRYFLATGSSPGHDLRYSTEKVESVWNFINKIWNAARFSIMNIGEEFKFEDIDLSKNLSLADKWILTRLNETIKTVTDLSDRYEFGEVGRALYNFIWDEFCDWYIEMSKIPMNGEDEAQKQVTRSVLSYVLERTMRMLHPYMPFVTEEIWQNLPHVGETIVTSAWPEVEEAYMFEESKQAMQYVVEIIKAVRQARSEVNTPLSKAIPIYIKTKDAEIKQMLDENQHYLERFGHPSELVISTDIETPDKAMTSVVGAGEVILPLEGLIDMDKEIARLEKEIDKWQSELDRVDKKLSNENFVNKAPEKIINEEKAKKHDYQEKFDSVKARIEQLKA.

The short motif at P44–H54 is the 'HIGH' region element. A 'KMSKS' region motif is present at residues K520–S524. K523 serves as a coordination point for ATP. Residues L805–A876 are a coiled coil.

This sequence belongs to the class-I aminoacyl-tRNA synthetase family. ValS type 1 subfamily. Monomer.

The protein localises to the cytoplasm. The catalysed reaction is tRNA(Val) + L-valine + ATP = L-valyl-tRNA(Val) + AMP + diphosphate. In terms of biological role, catalyzes the attachment of valine to tRNA(Val). As ValRS can inadvertently accommodate and process structurally similar amino acids such as threonine, to avoid such errors, it has a 'posttransfer' editing activity that hydrolyzes mischarged Thr-tRNA(Val) in a tRNA-dependent manner. This Staphylococcus carnosus (strain TM300) protein is Valine--tRNA ligase.